We begin with the raw amino-acid sequence, 30 residues long: ASEALVEIKPGEIGMVSGIPDEHLRRFVVI.

In terms of assembly, complex I is composed of about 45 different subunits.

It is found in the mitochondrion inner membrane. It catalyses the reaction a ubiquinone + NADH + 5 H(+)(in) = a ubiquinol + NAD(+) + 4 H(+)(out). In terms of biological role, transfer of electrons from NADH to the respiratory chain. The immediate electron acceptor for the enzyme is believed to be ubiquinone. The sequence is that of NADH-ubiquinone oxidoreductase 18 kDa subunit from Solanum tuberosum (Potato).